Reading from the N-terminus, the 228-residue chain is UPF0173 metal-dependent hydrolase LMHCC_0991 (228 aa).

It belongs to the UPF0173 family.

The protein is UPF0173 metal-dependent hydrolase LMHCC_0991 of Listeria monocytogenes serotype 4a (strain HCC23).